The chain runs to 624 residues: Leucine-rich repeat and IQ domain-containing protein 3 (624 aa).

LRR repeat units follow at residues 51-72 (SLRV…QSCI), 73-94 (KLIK…KFWN), and 98-119 (NLKL…CVLS). One can recognise an LRRCT domain in the interval 132–179 (CPVSLKKGYRHVLVNSIWPLKALDHHVISDEEIIQNWHLPERFKACNH). Residues 215–244 (HNSPVLIVQRWIRGFLVRKNLSPVFFHKKK) enclose the IQ domain. Residues 553–614 (KQKLKAEKYR…TKVAIVKTNL (62 aa)) are a coiled coil.

The protein is Leucine-rich repeat and IQ domain-containing protein 3 (LRRIQ3) of Homo sapiens (Human).